The following is a 46-amino-acid chain: TGSGPSLSIVNPLDVLRQRLLLEIARRRMRQSQDQIQANREILQTI.

Residue isoleucine 46 is modified to Isoleucine amide.

This sequence belongs to the sauvagine/corticotropin-releasing factor/urotensin I family.

It localises to the secreted. Regulation of fluid secretion. Stimulates primary urine secretion by Malpighian tubules and causes a dose-dependent stimulation of cAMP levels in the tubules. The chain is Diuretic hormone from Periplaneta americana (American cockroach).